Reading from the N-terminus, the 611-residue chain is UvrABC system protein C (611 aa).

Residues 14-91 (TSPGCYIHKD…IKENKPKYNI (78 aa)) enclose the GIY-YIG domain. The UVR domain occupies 196–231 (DQIIEDLRGKMAGAAQTMEFEKAAEYRDLIQSIGTL).

This sequence belongs to the UvrC family. In terms of assembly, interacts with UvrB in an incision complex.

The protein resides in the cytoplasm. The UvrABC repair system catalyzes the recognition and processing of DNA lesions. UvrC both incises the 5' and 3' sides of the lesion. The N-terminal half is responsible for the 3' incision and the C-terminal half is responsible for the 5' incision. This chain is UvrABC system protein C, found in Streptococcus gordonii (strain Challis / ATCC 35105 / BCRC 15272 / CH1 / DL1 / V288).